Consider the following 476-residue polypeptide: Methylenetetrahydrofolate--tRNA-(uracil-5-)-methyltransferase TrmFO (476 aa).

Residue 13-18 (GGGLAG) participates in FAD binding. Residues 425-446 (PPLESPPTHGADGKKLRGPDKT) are disordered. The span at 435–446 (ADGKKLRGPDKT) shows a compositional bias: basic and acidic residues.

The protein belongs to the MnmG family. TrmFO subfamily. The cofactor is FAD.

The protein resides in the cytoplasm. It carries out the reaction uridine(54) in tRNA + (6R)-5,10-methylene-5,6,7,8-tetrahydrofolate + NADH + H(+) = 5-methyluridine(54) in tRNA + (6S)-5,6,7,8-tetrahydrofolate + NAD(+). The enzyme catalyses uridine(54) in tRNA + (6R)-5,10-methylene-5,6,7,8-tetrahydrofolate + NADPH + H(+) = 5-methyluridine(54) in tRNA + (6S)-5,6,7,8-tetrahydrofolate + NADP(+). Functionally, catalyzes the folate-dependent formation of 5-methyl-uridine at position 54 (M-5-U54) in all tRNAs. This chain is Methylenetetrahydrofolate--tRNA-(uracil-5-)-methyltransferase TrmFO, found in Rhodopseudomonas palustris (strain BisB18).